We begin with the raw amino-acid sequence, 325 residues long: GTP 3',8-cyclase (325 aa).

The Radical SAM core domain maps to 10–229 (GYGRRINYLR…PSLEKIKSED (220 aa)). Arginine 19 is a binding site for GTP. Residues cysteine 26 and cysteine 30 each contribute to the [4Fe-4S] cluster site. Tyrosine 32 lines the S-adenosyl-L-methionine pocket. Cysteine 33 is a binding site for [4Fe-4S] cluster. Arginine 69 contributes to the GTP binding site. S-adenosyl-L-methionine is bound at residue glycine 73. Threonine 100 is a GTP binding site. An S-adenosyl-L-methionine-binding site is contributed by serine 124. Lysine 161 contributes to the GTP binding site. Position 195 (methionine 195) interacts with S-adenosyl-L-methionine. Residues cysteine 257 and cysteine 260 each coordinate [4Fe-4S] cluster. 262 to 264 (RLR) contacts GTP. [4Fe-4S] cluster is bound at residue cysteine 274.

The protein belongs to the radical SAM superfamily. MoaA family. As to quaternary structure, monomer and homodimer. Requires [4Fe-4S] cluster as cofactor.

It carries out the reaction GTP + AH2 + S-adenosyl-L-methionine = (8S)-3',8-cyclo-7,8-dihydroguanosine 5'-triphosphate + 5'-deoxyadenosine + L-methionine + A + H(+). The protein operates within cofactor biosynthesis; molybdopterin biosynthesis. In terms of biological role, catalyzes the cyclization of GTP to (8S)-3',8-cyclo-7,8-dihydroguanosine 5'-triphosphate. The protein is GTP 3',8-cyclase of Peptoclostridium acidaminophilum (Eubacterium acidaminophilum).